A 333-amino-acid chain; its full sequence is uncharacterized protein (333 aa).

This is an uncharacterized protein from Gallus gallus (Chicken).